Consider the following 611-residue polypeptide: MSRRKENEEVDKQTRIAIVSDDKCKPKRCRQECKKTCPVVRMGKLCIEVTPTSKIASLSEELCIGCGICVKKCPFEAITIINLPSNLEKHTTHRYSKNSFKLHRLPIPRPGEVLGLVGQNGIGKSTALKILAGKQKPNLGKYANPPDWTEILSYFRGSELQNYFTKILEDNLKALVKPQYVDQIPKAVRGAVGDLLDKKDERELQTKICEMLDLSHIRDREIAQLSGGELQRFAIAMVCIQNADIFMFDEPSSYLDVKQRLNAALTIRSLLHPTKFIIVVEHDLSVLDYLSDFICCLYGVPGCYGVVTMPFSVREGINIFLDGFVPTENMRFRTESLTFKVSESATEEEIKRMNHYVYPAMVKTLGKFELTVEKGHFSDSEILVLLGENGTGKTTFIRMLAGNLQPDGEVELPMLNISYKPQKISPKFQNHVRHLLHDKIRDAYVHPQFIADVMKPMKIEEIMDQEVQNLSGGELQRVALVLCLGKPADVYLIDEPSAYLDSEQRLVAAKVIKRYILHAKKTGFVVEHDFIMATYLADRVIVIEGQPSVKTTAFSPQSLLNGMNRFLELLGITFRRDPNNFRPRINKNNSVKDTEQKRSGQFFFLEDEACN.

4Fe-4S ferredoxin-type domains follow at residues 15–45 (RIAI…MGKL) and 54–83 (KIAS…IINL). ABC transporter domains lie at 78-323 (ITII…FLDG) and 350-570 (IKRM…LELL). ATP is bound by residues 118–125 (GQNGIGKS) and 387–394 (GENGTGKT).

Belongs to the ABC transporter superfamily. ABCE family. As to quaternary structure, interacts with components of eIF3 complex, namely eIF3a, eIF3j, eIF3b, eIF3c and eIF3i. Associates with the 40S ribosome subunit in an ATP-dependent manner and independently from the presence of the eIF3 complex. Forms a complex with Git and Pak; the interaction with Pak may be mediated by pix/dPIX. In terms of processing, ubiquitinated by Cnot4. Ubiquitination mediates the recruitment of autophagy receptors to the mitochondrial outer membrane and initiates mitophagy. Expressed in early and late larval imaginal disks (at protein level).

It localises to the cytoplasm. Functionally, plays a role in translation initiation and quality control of translation. Together with pelo and HBS1, is required for 48S complex formation from 80S ribosomes and dissociation of vacant 80S ribosomes. Stabilizes core components of eIF3 complex promoting their assembly into translation initiation-competent complexes. Together with pelo and HBS1, recognizes stalled ribosomes and promotes dissociation of elongation complexes assembled on non-stop mRNAs; this triggers endonucleolytic cleavage of the mRNA, a mechanism to release non-functional ribosomes and to degrade damaged mRNAs as part of the No-Go Decay (NGD) pathway. Plays a role in the regulation of mRNA turnover. Plays a role in quality control of translation of mitochondrial outer membrane-localized mRNA. As part of the Pink1-regulated signaling, ubiquitinated by Cnot4 upon mitochondria damage; this modification generates polyubiquitin signals that recruits autophagy receptors to the mitochondrial outer membrane to initiate mitophagy. Required in the wing disk for cell division and growth as well as cell survival. During muscle embryogenesis, required for the recruitment of Pak to muscle attachments in the embryo, hence may play a role in proper muscle morphogenesis and proper guidance and targeting of subsets of myotubes. This Drosophila melanogaster (Fruit fly) protein is Protein Pixie.